We begin with the raw amino-acid sequence, 104 residues long: Putative Fis-like DNA-binding protein (104 aa).

A DNA-binding region (H-T-H motif) is located at residues 80-99; that stretch reads QTKASELLGLNRGTLRKKLK.

The protein belongs to the transcriptional regulatory Fis family.

The protein is Putative Fis-like DNA-binding protein of Pseudomonas aeruginosa (strain ATCC 15692 / DSM 22644 / CIP 104116 / JCM 14847 / LMG 12228 / 1C / PRS 101 / PAO1).